We begin with the raw amino-acid sequence, 859 residues long: DNA mismatch repair protein MutS (859 aa).

Residue 617-624 (GPNMGGKS) coordinates ATP. The tract at residues 801 to 820 (TSLPHEVAPQAPGKPSVPQQ) is disordered.

It belongs to the DNA mismatch repair MutS family.

Functionally, this protein is involved in the repair of mismatches in DNA. It is possible that it carries out the mismatch recognition step. This protein has a weak ATPase activity. This Pseudomonas fluorescens (strain ATCC BAA-477 / NRRL B-23932 / Pf-5) protein is DNA mismatch repair protein MutS.